A 799-amino-acid polypeptide reads, in one-letter code: Mitochondrial intermediate peptidase (799 aa).

His-562 contacts Zn(2+). The active site involves Glu-563. His-566 and His-569 together coordinate Zn(2+).

This sequence belongs to the peptidase M3 family. The cofactor is Zn(2+).

The protein resides in the mitochondrion matrix. The catalysed reaction is Release of an N-terminal octapeptide as second stage of processing of some proteins imported into the mitochondrion.. Cleaves proteins, imported into the mitochondrion, to their mature size. While most mitochondrial precursor proteins are processed to the mature form in one step by mitochondrial processing peptidase (MPP), the sequential cleavage by MIP of an octapeptide after initial processing by MPP is a required step for a subgroup of nuclear-encoded precursor proteins destined for the matrix or the inner membrane. In Aspergillus niger (strain ATCC MYA-4892 / CBS 513.88 / FGSC A1513), this protein is Mitochondrial intermediate peptidase (oct1).